The following is a 241-amino-acid chain: Probable transcriptional regulatory protein LMOf2365_1554 (241 aa).

Residues 1–14 (MSGHSKWNNIQGRK) show a composition bias toward polar residues. The segment at 1-22 (MSGHSKWNNIQGRKNAQDSKRS) is disordered.

The protein belongs to the TACO1 family.

The protein resides in the cytoplasm. The chain is Probable transcriptional regulatory protein LMOf2365_1554 from Listeria monocytogenes serotype 4b (strain F2365).